A 310-amino-acid polypeptide reads, in one-letter code: Ribosomal RNA small subunit methyltransferase H (310 aa).

Residues 40–42 (GGH), aspartate 59, phenylalanine 89, aspartate 104, and glutamine 111 contribute to the S-adenosyl-L-methionine site.

Belongs to the methyltransferase superfamily. RsmH family.

The protein resides in the cytoplasm. The catalysed reaction is cytidine(1402) in 16S rRNA + S-adenosyl-L-methionine = N(4)-methylcytidine(1402) in 16S rRNA + S-adenosyl-L-homocysteine + H(+). Specifically methylates the N4 position of cytidine in position 1402 (C1402) of 16S rRNA. This chain is Ribosomal RNA small subunit methyltransferase H, found in Amoebophilus asiaticus (strain 5a2).